Reading from the N-terminus, the 1404-residue chain is DNA-directed RNA polymerase subunit beta' (1404 aa).

Residues Cys-70, Cys-72, Cys-85, and Cys-88 each coordinate Zn(2+). Mg(2+)-binding residues include Asp-458, Asp-460, and Asp-462. 4 residues coordinate Zn(2+): Cys-813, Cys-887, Cys-894, and Cys-897. The interval 1377-1404 is disordered; that stretch reads ERRAIAESEAAELEASQAETSDENAAAE.

The protein belongs to the RNA polymerase beta' chain family. In terms of assembly, the RNAP catalytic core consists of 2 alpha, 1 beta, 1 beta' and 1 omega subunit. When a sigma factor is associated with the core the holoenzyme is formed, which can initiate transcription. The cofactor is Mg(2+). Requires Zn(2+) as cofactor.

It carries out the reaction RNA(n) + a ribonucleoside 5'-triphosphate = RNA(n+1) + diphosphate. In terms of biological role, DNA-dependent RNA polymerase catalyzes the transcription of DNA into RNA using the four ribonucleoside triphosphates as substrates. This chain is DNA-directed RNA polymerase subunit beta', found in Polaromonas naphthalenivorans (strain CJ2).